Consider the following 171-residue polypeptide: 3-hydroxydecanoyl-[acyl-carrier-protein] dehydratase (171 aa).

His-70 is a catalytic residue.

The protein belongs to the thioester dehydratase family. FabA subfamily. As to quaternary structure, homodimer.

It is found in the cytoplasm. It carries out the reaction a (3R)-hydroxyacyl-[ACP] = a (2E)-enoyl-[ACP] + H2O. The enzyme catalyses (3R)-hydroxydecanoyl-[ACP] = (2E)-decenoyl-[ACP] + H2O. The catalysed reaction is (2E)-decenoyl-[ACP] = (3Z)-decenoyl-[ACP]. It participates in lipid metabolism; fatty acid biosynthesis. Necessary for the introduction of cis unsaturation into fatty acids. Catalyzes the dehydration of (3R)-3-hydroxydecanoyl-ACP to E-(2)-decenoyl-ACP and then its isomerization to Z-(3)-decenoyl-ACP. Can catalyze the dehydratase reaction for beta-hydroxyacyl-ACPs with saturated chain lengths up to 16:0, being most active on intermediate chain length. The sequence is that of 3-hydroxydecanoyl-[acyl-carrier-protein] dehydratase from Shewanella putrefaciens (strain CN-32 / ATCC BAA-453).